A 244-amino-acid polypeptide reads, in one-letter code: Small ribosomal subunit protein eS6 (244 aa).

The segment at 185–244 (RLQRKRHMRAVKRRRYAKQREEEATYAKLLAKRKKEEREAHAKRRSSARESSLRESKSKA) is disordered. Residues 186–201 (LQRKRHMRAVKRRRYA) show a composition bias toward basic residues. Basic and acidic residues predominate over residues 231 to 244 (SARESSLRESKSKA).

This sequence belongs to the eukaryotic ribosomal protein eS6 family. Ribosomal protein S6 is the major substrate of protein kinases in eukaryote ribosomes.

Its function is as follows. Component of the 40S small ribosomal subunit. Plays an important role in controlling cell growth and proliferation through the selective translation of particular classes of mRNA. The protein is Small ribosomal subunit protein eS6 (RPS6) of Branchiostoma floridae (Florida lancelet).